The primary structure comprises 354 residues: MNGTEGENFYIPMSNKTGVVRSPFDYPQYYLAEPWKFSVLAAYMFFLIIAGFPVNFLTLYVTIQHKKLRQPLNYILLNLAVADLFMIFGGFPSTMITSMNGYFVFGPSGCNFEGFFATLGGEIGLWSLVVLAIERYVVVCKPMSNFRFGSQHAFMGVGLTWIMAMACAFPPLVGWSRYIPEGMQCSCGIDYYTLKPEVNNESFVIYMFVVHFSIPLTIIFFCYGRLVCTVKEAAAQQQESETTQRAEREVTRMVIIMVIAFLICWLPYASVAFFIFCNQGSEFGPIFMTIPAFFAKAASLYNPLIYILMNKQFRNCMITTICCGKNPFEEEESTSASASKTEASSVSSSQVAPA.

The Extracellular segment spans residues 1–36; the sequence is MNGTEGENFYIPMSNKTGVVRSPFDYPQYYLAEPWK. Asparagine 2 and asparagine 15 each carry an N-linked (GlcNAc...) asparagine glycan. Residues 37-61 traverse the membrane as a helical segment; sequence FSVLAAYMFFLIIAGFPVNFLTLYV. The Cytoplasmic portion of the chain corresponds to 62-73; the sequence is TIQHKKLRQPLN. Residues 74 to 96 traverse the membrane as a helical segment; the sequence is YILLNLAVADLFMIFGGFPSTMI. The Extracellular portion of the chain corresponds to 97-110; sequence TSMNGYFVFGPSGC. A disulfide bridge connects residues cysteine 110 and cysteine 187. Residues 111 to 133 form a helical membrane-spanning segment; it reads NFEGFFATLGGEIGLWSLVVLAI. The 'Ionic lock' involved in activated form stabilization signature appears at 134–136; that stretch reads ERY. Over 134–152 the chain is Cytoplasmic; sequence ERYVVVCKPMSNFRFGSQH. The helical transmembrane segment at 153 to 173 threads the bilayer; it reads AFMGVGLTWIMAMACAFPPLV. Over 174–202 the chain is Extracellular; that stretch reads GWSRYIPEGMQCSCGIDYYTLKPEVNNES. N-linked (GlcNAc...) asparagine glycosylation is present at asparagine 200. A helical transmembrane segment spans residues 203–224; that stretch reads FVIYMFVVHFSIPLTIIFFCYG. Residues 225 to 252 are Cytoplasmic-facing; it reads RLVCTVKEAAAQQQESETTQRAEREVTR. Residues 253-274 traverse the membrane as a helical segment; that stretch reads MVIIMVIAFLICWLPYASVAFF. The Extracellular segment spans residues 275–286; the sequence is IFCNQGSEFGPI. The chain crosses the membrane as a helical span at residues 287–308; it reads FMTIPAFFAKAASLYNPLIYIL. Lysine 296 carries the post-translational modification N6-(retinylidene)lysine. Over 309-354 the chain is Cytoplasmic; the sequence is MNKQFRNCMITTICCGKNPFEEEESTSASASKTEASSVSSSQVAPA. 2 S-palmitoyl cysteine lipidation sites follow: cysteine 322 and cysteine 323. The interval 333-354 is disordered; it reads STSASASKTEASSVSSSQVAPA. Over residues 334 to 354 the composition is skewed to low complexity; it reads TSASASKTEASSVSSSQVAPA.

It belongs to the G-protein coupled receptor 1 family. Opsin subfamily. Phosphorylated on some or all of the serine and threonine residues present in the C-terminal region. Post-translationally, contains one covalently linked retinal chromophore.

The protein localises to the membrane. It is found in the cell projection. The protein resides in the cilium. Its subcellular location is the photoreceptor outer segment. Its function is as follows. Photoreceptor required for image-forming vision at low light intensity. While most salt water fish species use retinal as chromophore, most freshwater fish use 3-dehydroretinal, or a mixture of retinal and 3-dehydroretinal. Light-induced isomerization of 11-cis to all-trans retinal triggers a conformational change that activates signaling via G-proteins. Subsequent receptor phosphorylation mediates displacement of the bound G-protein alpha subunit by arrestin and terminates signaling. This chain is Rhodopsin (rho), found in Scyliorhinus canicula (Small-spotted catshark).